A 396-amino-acid polypeptide reads, in one-letter code: S-adenosylmethionine synthase (396 aa).

ATP is bound at residue His16. Position 18 (Asp18) interacts with Mg(2+). Glu44 is a K(+) binding site. Residues Glu57 and Gln100 each coordinate L-methionine. Residues 100–110 (QSPDINQGVDR) are flexible loop. ATP-binding positions include 165–167 (DAK), Asp240, 246–247 (RK), Ala263, and Lys267. Residue Asp240 coordinates L-methionine. L-methionine is bound at residue Lys271.

Belongs to the AdoMet synthase family. In terms of assembly, homotetramer; dimer of dimers. Requires Mg(2+) as cofactor. The cofactor is K(+).

The protein resides in the cytoplasm. It carries out the reaction L-methionine + ATP + H2O = S-adenosyl-L-methionine + phosphate + diphosphate. It participates in amino-acid biosynthesis; S-adenosyl-L-methionine biosynthesis; S-adenosyl-L-methionine from L-methionine: step 1/1. In terms of biological role, catalyzes the formation of S-adenosylmethionine (AdoMet) from methionine and ATP. The overall synthetic reaction is composed of two sequential steps, AdoMet formation and the subsequent tripolyphosphate hydrolysis which occurs prior to release of AdoMet from the enzyme. The chain is S-adenosylmethionine synthase from Pseudomonas fluorescens (strain Pf0-1).